Consider the following 184-residue polypeptide: GTP cyclohydrolase 1 (184 aa).

The Zn(2+) site is built by C75, H78, and C146.

This sequence belongs to the GTP cyclohydrolase I family. As to quaternary structure, homomer.

It carries out the reaction GTP + H2O = 7,8-dihydroneopterin 3'-triphosphate + formate + H(+). It participates in cofactor biosynthesis; 7,8-dihydroneopterin triphosphate biosynthesis; 7,8-dihydroneopterin triphosphate from GTP: step 1/1. The chain is GTP cyclohydrolase 1 from Streptococcus pneumoniae (strain Taiwan19F-14).